We begin with the raw amino-acid sequence, 205 residues long: Small ribosomal subunit protein uS4 (205 aa).

The segment at 18-46 (NIWGRPKSPVNRREYGPGQHGQRRKGKLS) is disordered. The S4 RNA-binding domain occupies 94 to 154 (RRLDAVVYRA…EASKQLAHVL (61 aa)).

The protein belongs to the universal ribosomal protein uS4 family. Part of the 30S ribosomal subunit. Contacts protein S5. The interaction surface between S4 and S5 is involved in control of translational fidelity.

Its function is as follows. One of the primary rRNA binding proteins, it binds directly to 16S rRNA where it nucleates assembly of the body of the 30S subunit. Functionally, with S5 and S12 plays an important role in translational accuracy. The polypeptide is Small ribosomal subunit protein uS4 (Bradyrhizobium diazoefficiens (strain JCM 10833 / BCRC 13528 / IAM 13628 / NBRC 14792 / USDA 110)).